Here is a 516-residue protein sequence, read N- to C-terminus: Histidine ammonia-lyase (516 aa).

Positions 143–145 (ASG) form a cross-link, 5-imidazolinone (Ala-Gly). At serine 144 the chain carries 2,3-didehydroalanine (Ser).

The protein belongs to the PAL/histidase family. In terms of processing, contains an active site 4-methylidene-imidazol-5-one (MIO), which is formed autocatalytically by cyclization and dehydration of residues Ala-Ser-Gly.

It is found in the cytoplasm. It catalyses the reaction L-histidine = trans-urocanate + NH4(+). Its pathway is amino-acid degradation; L-histidine degradation into L-glutamate; N-formimidoyl-L-glutamate from L-histidine: step 1/3. This Koribacter versatilis (strain Ellin345) protein is Histidine ammonia-lyase.